The sequence spans 224 residues: Deoxyribose-phosphate aldolase (224 aa).

The Proton donor/acceptor role is filled by aspartate 93. The Schiff-base intermediate with acetaldehyde role is filled by lysine 159. The active-site Proton donor/acceptor is lysine 189.

Belongs to the DeoC/FbaB aldolase family. DeoC type 1 subfamily.

The protein localises to the cytoplasm. It carries out the reaction 2-deoxy-D-ribose 5-phosphate = D-glyceraldehyde 3-phosphate + acetaldehyde. It participates in carbohydrate degradation; 2-deoxy-D-ribose 1-phosphate degradation; D-glyceraldehyde 3-phosphate and acetaldehyde from 2-deoxy-alpha-D-ribose 1-phosphate: step 2/2. In terms of biological role, catalyzes a reversible aldol reaction between acetaldehyde and D-glyceraldehyde 3-phosphate to generate 2-deoxy-D-ribose 5-phosphate. This is Deoxyribose-phosphate aldolase from Mycobacterium bovis (strain ATCC BAA-935 / AF2122/97).